The following is a 251-amino-acid chain: Probable transcriptional regulatory protein Caul_0780 (251 aa).

The protein belongs to the TACO1 family.

Its subcellular location is the cytoplasm. The polypeptide is Probable transcriptional regulatory protein Caul_0780 (Caulobacter sp. (strain K31)).